We begin with the raw amino-acid sequence, 777 residues long: UPF0313 protein VP1980 (777 aa).

The region spanning 363-642 is the Radical SAM core domain; sequence AYDMIKTSVN…KALLRYHDPA (280 aa). [4Fe-4S] cluster contacts are provided by cysteine 377, cysteine 381, and cysteine 384. Residues 675-777 form a disordered region; sequence AQTPAQRRKS…PAGQRKPKRR (103 aa). Residues 680–698 show a composition bias toward basic residues; that stretch reads QRRKSGRHGANRFATKHTK. Over residues 709–719 the composition is skewed to basic and acidic residues; it reads KRAEGGSKDGK. Residues 736-747 show a composition bias toward polar residues; it reads PASNGQRPSGNG. A compositionally biased stretch (low complexity) spans 755–769; that stretch reads KPQGQGRPQGQGKPA.

It belongs to the UPF0313 family. [4Fe-4S] cluster serves as cofactor.

The polypeptide is UPF0313 protein VP1980 (Vibrio parahaemolyticus serotype O3:K6 (strain RIMD 2210633)).